The primary structure comprises 254 residues: Activity-regulated cytoskeleton associated protein 1 (254 aa).

This sequence belongs to the ARC/ARG3.1 family. As to quaternary structure, homooligomer; homooligomerizes into virion-like capsids. Expressed in a specific population of brain neurons, named E347, that are necessary and sufficient for proper body fat storage.

It localises to the extracellular vesicle membrane. It is found in the synapse. Master regulator of synaptic plasticity that self-assembles into virion-like capsids that encapsulate RNAs and mediate intercellular RNA transfer from motorneurons to muscles. Arc1 protein is released from motorneurons in extracellular vesicles that mediate the transfer of Arc1 mRNA into muscle cells, where Arc1 mRNA can undergo activity-dependent translation. Intercellular transfer od Arc1 mRNA is required for synaptic plasticity at the neuromuscular junction. May play a role in energy balance: required for regulation of body fat by a specific population of brain neurons, named E347, that are necessary and sufficient for proper body fat storage. The protein is Activity-regulated cytoskeleton associated protein 1 of Drosophila melanogaster (Fruit fly).